Reading from the N-terminus, the 122-residue chain is Small ribosomal subunit protein bS6 (122 aa).

Positions 96 to 122 are disordered; it reads ETAPSPMMKAVQKEDAAKSHRTEAPAA. Positions 106–122 are enriched in basic and acidic residues; it reads VQKEDAAKSHRTEAPAA.

This sequence belongs to the bacterial ribosomal protein bS6 family.

Binds together with bS18 to 16S ribosomal RNA. The polypeptide is Small ribosomal subunit protein bS6 (Herminiimonas arsenicoxydans).